A 286-amino-acid chain; its full sequence is Bifunctional protein FolD (286 aa).

Residues 163–165, Ile-188, and Ile-229 contribute to the NADP(+) site; that span reads GMS.

Belongs to the tetrahydrofolate dehydrogenase/cyclohydrolase family. In terms of assembly, homodimer.

It carries out the reaction (6R)-5,10-methylene-5,6,7,8-tetrahydrofolate + NADP(+) = (6R)-5,10-methenyltetrahydrofolate + NADPH. The catalysed reaction is (6R)-5,10-methenyltetrahydrofolate + H2O = (6R)-10-formyltetrahydrofolate + H(+). The protein operates within one-carbon metabolism; tetrahydrofolate interconversion. Functionally, catalyzes the oxidation of 5,10-methylenetetrahydrofolate to 5,10-methenyltetrahydrofolate and then the hydrolysis of 5,10-methenyltetrahydrofolate to 10-formyltetrahydrofolate. The protein is Bifunctional protein FolD of Helicobacter hepaticus (strain ATCC 51449 / 3B1).